The chain runs to 255 residues: MKKFFITANWKLNGNIKMISSFFKYLKLYSSSYLEKNTVIIAPPTIYLERVCKNISNMNIFLGSQNVDINLNGAFTGETSILMLRDIGVKYVIIGHSERRFLHHETDDIIAKKFHLIKKSNLTPILCVGETEIEKKHNQTEQVIQRQLNLILKNLGTSAFKNIIIAYEPIWAIGTGVSADPEHVQLIHVFIKNYILKYSSINRNDIIIQYGGSINHTNVKKFIEQPDINGLLIGNSSLSAKEFLEIIKIAHEHYS.

9 to 11 (NWK) serves as a coordination point for substrate. Residue histidine 96 is the Electrophile of the active site. The Proton acceptor role is filled by glutamate 168. Glycine 174 and serine 213 together coordinate substrate.

The protein belongs to the triosephosphate isomerase family. In terms of assembly, homodimer.

It localises to the cytoplasm. It carries out the reaction D-glyceraldehyde 3-phosphate = dihydroxyacetone phosphate. The protein operates within carbohydrate biosynthesis; gluconeogenesis. It functions in the pathway carbohydrate degradation; glycolysis; D-glyceraldehyde 3-phosphate from glycerone phosphate: step 1/1. In terms of biological role, involved in the gluconeogenesis. Catalyzes stereospecifically the conversion of dihydroxyacetone phosphate (DHAP) to D-glyceraldehyde-3-phosphate (G3P). In Buchnera aphidicola subsp. Acyrthosiphon pisum (strain APS) (Acyrthosiphon pisum symbiotic bacterium), this protein is Triosephosphate isomerase.